The chain runs to 513 residues: Ribonuclease Y (513 aa).

A helical transmembrane segment spans residues 6–26 (YIIIAVVIIIICVILGLYIVD). Residues 203 to 288 (TVHVVNLPND…EMVEKAKKEV (86 aa)) enclose the KH domain. Residues 329 to 422 (VLKHSIEVSH…VQAADAISAA (94 aa)) enclose the HD domain.

The protein belongs to the RNase Y family.

It is found in the cell membrane. Functionally, endoribonuclease that initiates mRNA decay. This chain is Ribonuclease Y, found in Clostridium botulinum (strain ATCC 19397 / Type A).